A 278-amino-acid chain; its full sequence is MKRKMKLSLIENSVSRKTTFTKRKKGMTKKLTELVTLCGVEACAVVYSPFNSIPEAWPSREGVEDVVSKFMELSVLDRTKKMVDQETFISQRIAKEKEQLQKLRDENHNSQIRELMFGCLKGETNVYNLDGRDLQDLSLYIDKYLNGLTRRIEILIENGESSSSLPLPIVANAAAPVGFDGPMFQYHNQNQQKPVQFQYQALYDFYDQIPKKIHGFNMNMNKDSNQSMVLDLNQNLNDGEDEGIPCMDNNNYHPEIDCLATVTTAPTDVCAPNITNDL.

Positions 1-60 (MKRKMKLSLIENSVSRKTTFTKRKKGMTKKLTELVTLCGVEACAVVYSPFNSIPEAWPSR) constitute an MADS-box domain.

As to quaternary structure, interacts with AGL61/DIANA and AGL62. Male gametophyte, embryo and endosperm.

It localises to the nucleus. Its function is as follows. Probable transcription factor involved in the development of gametophytes and seeds. The polypeptide is MADS-box transcription factor PHERES 2 (PHE2) (Arabidopsis thaliana (Mouse-ear cress)).